The following is a 176-amino-acid chain: Prepronociceptin (176 aa).

Residues 1–19 (MKILFCDLLLLSLFSSVSS) form the signal peptide. 2 consecutive propeptides follow at residues 20–95 (SCQK…MQHL) and 169–176 (TLHQNGNA).

It belongs to the opioid neuropeptide precursor family. Specific enzymatic cleavages at paired basic residues probably yield other active peptides besides nociceptin. In terms of processing, the N-terminal domain contains 6 conserved cysteines thought to be involved in disulfide bonding and/or processing.

It is found in the secreted. Ligand of the opioid receptor-like receptor OPRL1. It may act as a transmitter in the brain by modulating nociceptive and locomotor behavior. May be involved in neuronal differentiation and development. In terms of biological role, blocks nociceptin action in pain transmission by inhibiting nociceptin-induced hyperalgesia and allodynia. Functionally, has potent analgesic activity. This Bos taurus (Bovine) protein is Prepronociceptin (PNOC).